Reading from the N-terminus, the 192-residue chain is Superoxide dismutase [Fe] (192 aa).

Fe cation contacts are provided by His26, His73, Asp157, and His161.

This sequence belongs to the iron/manganese superoxide dismutase family. As to quaternary structure, homodimer. Requires Fe cation as cofactor.

The enzyme catalyses 2 superoxide + 2 H(+) = H2O2 + O2. Its function is as follows. Destroys superoxide anion radicals which are normally produced within the cells and which are toxic to biological systems. This is Superoxide dismutase [Fe] from Pseudoalteromonas translucida (strain TAC 125).